Here is a 287-residue protein sequence, read N- to C-terminus: ATP synthase gamma chain (287 aa).

The protein belongs to the ATPase gamma chain family. As to quaternary structure, F-type ATPases have 2 components, CF(1) - the catalytic core - and CF(0) - the membrane proton channel. CF(1) has five subunits: alpha(3), beta(3), gamma(1), delta(1), epsilon(1). CF(0) has three main subunits: a, b and c.

Its subcellular location is the cell inner membrane. Functionally, produces ATP from ADP in the presence of a proton gradient across the membrane. The gamma chain is believed to be important in regulating ATPase activity and the flow of protons through the CF(0) complex. This chain is ATP synthase gamma chain, found in Geobacter sp. (strain M21).